A 315-amino-acid chain; its full sequence is Methionyl-tRNA formyltransferase (315 aa).

Residue 107-110 (SLLP) participates in (6S)-5,6,7,8-tetrahydrofolate binding.

This sequence belongs to the Fmt family.

It carries out the reaction L-methionyl-tRNA(fMet) + (6R)-10-formyltetrahydrofolate = N-formyl-L-methionyl-tRNA(fMet) + (6S)-5,6,7,8-tetrahydrofolate + H(+). Its function is as follows. Attaches a formyl group to the free amino group of methionyl-tRNA(fMet). The formyl group appears to play a dual role in the initiator identity of N-formylmethionyl-tRNA by promoting its recognition by IF2 and preventing the misappropriation of this tRNA by the elongation apparatus. The sequence is that of Methionyl-tRNA formyltransferase from Borreliella afzelii (strain PKo) (Borrelia afzelii).